A 197-amino-acid polypeptide reads, in one-letter code: MNKKSILKKPKNAQSTQEKQLITWSKSLIDEARSRLQYDFFALEWIEKLVDPVSLETLEEARKYLRKSDYDQVVKERKLVNLCGYPVCPYEPKQQTRYKLEDSGMKVYGGLNYYCSKDCFLKSCQYMVELSDEPLWIREDAREAMKQHLDPRQDEAFRKELENKKIEDVRLLLQALPVGYKAKVGEIVEHPLANEQS.

An RTR1-type zinc finger spans residues 60–139 (EARKYLRKSD…LSDEPLWIRE (80 aa)). Zn(2+)-binding residues include cysteine 83, cysteine 88, cysteine 115, and cysteine 119.

The protein belongs to the RPAP2 family.

The protein resides in the cytoplasm. Its subcellular location is the nucleus. The catalysed reaction is O-phospho-L-seryl-[protein] + H2O = L-seryl-[protein] + phosphate. It catalyses the reaction O-phospho-L-threonyl-[protein] + H2O = L-threonyl-[protein] + phosphate. Its function is as follows. Putative RNA polymerase II subunit B1 C-terminal domain (CTD) phosphatase involved in RNA polymerase II transcription regulation. The sequence is that of Putative RNA polymerase II subunit B1 CTD phosphatase rtr1 from Schizosaccharomyces pombe (strain 972 / ATCC 24843) (Fission yeast).